A 505-amino-acid chain; its full sequence is Lysine--tRNA ligase (505 aa).

Mg(2+) contacts are provided by glutamate 415 and glutamate 422.

The protein belongs to the class-II aminoacyl-tRNA synthetase family. As to quaternary structure, homodimer. Requires Mg(2+) as cofactor.

The protein resides in the cytoplasm. The catalysed reaction is tRNA(Lys) + L-lysine + ATP = L-lysyl-tRNA(Lys) + AMP + diphosphate. This chain is Lysine--tRNA ligase (lysS), found in Salmonella typhimurium (strain LT2 / SGSC1412 / ATCC 700720).